Consider the following 156-residue polypeptide: Cyanate hydratase (156 aa).

Residues R96, E99, and S122 contribute to the active site.

It belongs to the cyanase family.

The enzyme catalyses cyanate + hydrogencarbonate + 3 H(+) = NH4(+) + 2 CO2. Functionally, catalyzes the reaction of cyanate with bicarbonate to produce ammonia and carbon dioxide. This Pseudomonas aeruginosa (strain UCBPP-PA14) protein is Cyanate hydratase.